A 95-amino-acid polypeptide reads, in one-letter code: Integration host factor subunit beta (95 aa).

This sequence belongs to the bacterial histone-like protein family. Heterodimer of an alpha and a beta chain.

This protein is one of the two subunits of integration host factor, a specific DNA-binding protein that functions in genetic recombination as well as in transcriptional and translational control. In Shewanella loihica (strain ATCC BAA-1088 / PV-4), this protein is Integration host factor subunit beta.